We begin with the raw amino-acid sequence, 621 residues long: tRNA 5-methylaminomethyl-2-thiouridine biosynthesis bifunctional protein MnmC (621 aa).

The tRNA (mnm(5)s(2)U34)-methyltransferase stretch occupies residues 1 to 222; it reads MKNANLSFKG…KRQMSSAVLE (222 aa). Positions 250–621 are FAD-dependent cmnm(5)s(2)U34 oxidoreductase; sequence IGTGVAGLAT…LIRKLKKGLK (372 aa).

This sequence in the N-terminal section; belongs to the methyltransferase superfamily. tRNA (mnm(5)s(2)U34)-methyltransferase family. In the C-terminal section; belongs to the DAO family. FAD serves as cofactor.

It localises to the cytoplasm. It catalyses the reaction 5-aminomethyl-2-thiouridine(34) in tRNA + S-adenosyl-L-methionine = 5-methylaminomethyl-2-thiouridine(34) in tRNA + S-adenosyl-L-homocysteine + H(+). Its function is as follows. Catalyzes the last two steps in the biosynthesis of 5-methylaminomethyl-2-thiouridine (mnm(5)s(2)U) at the wobble position (U34) in tRNA. Catalyzes the FAD-dependent demodification of cmnm(5)s(2)U34 to nm(5)s(2)U34, followed by the transfer of a methyl group from S-adenosyl-L-methionine to nm(5)s(2)U34, to form mnm(5)s(2)U34. This Campylobacter concisus (strain 13826) protein is tRNA 5-methylaminomethyl-2-thiouridine biosynthesis bifunctional protein MnmC.